The following is a 159-amino-acid chain: MATNKEVVLTYEGLQKLEQELENLKTVKRREVAERIKQALSFGDISENSEYDEAKNEQAYIEGRIFQLENMLKNAKVIDEEDIQTDVVSIGSKVKVLDMEFDEEVEYYIVGSTEADPSQYKISNESPVGKALIGGKIGDIVEVTVPDGVIKFKILEIRK.

The stretch at 3-37 forms a coiled coil; sequence TNKEVVLTYEGLQKLEQELENLKTVKRREVAERIK.

This sequence belongs to the GreA/GreB family.

Functionally, necessary for efficient RNA polymerase transcription elongation past template-encoded arresting sites. The arresting sites in DNA have the property of trapping a certain fraction of elongating RNA polymerases that pass through, resulting in locked ternary complexes. Cleavage of the nascent transcript by cleavage factors such as GreA or GreB allows the resumption of elongation from the new 3'terminus. GreA releases sequences of 2 to 3 nucleotides. The sequence is that of Transcription elongation factor GreA from Acetivibrio thermocellus (strain ATCC 27405 / DSM 1237 / JCM 9322 / NBRC 103400 / NCIMB 10682 / NRRL B-4536 / VPI 7372) (Clostridium thermocellum).